Consider the following 571-residue polypeptide: Proline--tRNA ligase (571 aa).

The protein belongs to the class-II aminoacyl-tRNA synthetase family. ProS type 1 subfamily. As to quaternary structure, homodimer.

The protein localises to the cytoplasm. The catalysed reaction is tRNA(Pro) + L-proline + ATP = L-prolyl-tRNA(Pro) + AMP + diphosphate. Functionally, catalyzes the attachment of proline to tRNA(Pro) in a two-step reaction: proline is first activated by ATP to form Pro-AMP and then transferred to the acceptor end of tRNA(Pro). As ProRS can inadvertently accommodate and process non-cognate amino acids such as alanine and cysteine, to avoid such errors it has two additional distinct editing activities against alanine. One activity is designated as 'pretransfer' editing and involves the tRNA(Pro)-independent hydrolysis of activated Ala-AMP. The other activity is designated 'posttransfer' editing and involves deacylation of mischarged Ala-tRNA(Pro). The misacylated Cys-tRNA(Pro) is not edited by ProRS. The protein is Proline--tRNA ligase of Glaesserella parasuis serovar 5 (strain SH0165) (Haemophilus parasuis).